The primary structure comprises 85 residues: U4-theraphotoxin-Hhn1t (85 aa).

A signal peptide spans 1–22 (MKVTLIAILTCAAVLVLHTTAA). A propeptide spanning residues 23–48 (EELEAESQLMEVGMPDTELAAVDEER) is cleaved from the precursor. Intrachain disulfides connect Cys-52–Cys-66, Cys-56–Cys-77, and Cys-71–Cys-82.

Belongs to the neurotoxin 12 (Hwtx-2) family. 02 (Hwtx-2) subfamily. As to expression, expressed by the venom gland.

The protein localises to the secreted. Postsynaptic neurotoxin. The polypeptide is U4-theraphotoxin-Hhn1t (Cyriopagopus hainanus (Chinese bird spider)).